The following is a 622-amino-acid chain: MALLQIAEPGMSAEPHKHRLAVGIDLGTTNSLVATVRNGLSVCLADEEGRAMLPSIVRYRADGAVQVGHAAAPFQATDPKNTIVSAKRFMGRGLKDVAYVEAMPYDFEDAPGMVRLRTVQGVKSPVEVSAEILRALRERAEASLGGPLTGAVITVPAYFDDAQRQATKDAARLAGLEVLRLLNEPTAAAVAYGLDNAAEGVYAVYDLGGGTFDLSVLKLSRGVFEVLSTNGDAALGGDDFDHRLFCWVLDKARIAPPSTEDARRLQLKAREAKELLTACESAQIQCRLASGEEVDLVVTREAFAEMTAHLVKKTLGPVRKALRDAGLAPEDIKGVVMVGGATRMPHIQRAVAEYFGQEPLNNLDPDKVVALGAAIQANVLAGNRASEDDWLLLDVIPLSLGLETMGGLVEKVVPRNSTLPIARAQEFTTFKDGQTAMAFHVVQGERELVADCRSLARFELRGIPPMAAGAARIRVTFQVDADGLLSVSAREMSSGVEASVLVKPSYGLSDDEISGMLREGMERAGDDMAARALREQQVEADRVIEATEHALAADGSLLNAEERASIDAAIDALRALRAGTDHRAIKAGIDALSRATDEFAARRMDHSIRAALTGHKLDEFQT.

Belongs to the heat shock protein 70 family.

Functionally, chaperone involved in the maturation of iron-sulfur cluster-containing proteins. Has a low intrinsic ATPase activity which is markedly stimulated by HscB. The polypeptide is Chaperone protein HscA homolog (Azoarcus sp. (strain BH72)).